A 285-amino-acid chain; its full sequence is Bifunctional protein FolD (285 aa).

NADP(+) contacts are provided by residues 166 to 168 (GAS) and isoleucine 232.

The protein belongs to the tetrahydrofolate dehydrogenase/cyclohydrolase family. In terms of assembly, homodimer.

It carries out the reaction (6R)-5,10-methylene-5,6,7,8-tetrahydrofolate + NADP(+) = (6R)-5,10-methenyltetrahydrofolate + NADPH. The catalysed reaction is (6R)-5,10-methenyltetrahydrofolate + H2O = (6R)-10-formyltetrahydrofolate + H(+). The protein operates within one-carbon metabolism; tetrahydrofolate interconversion. Catalyzes the oxidation of 5,10-methylenetetrahydrofolate to 5,10-methenyltetrahydrofolate and then the hydrolysis of 5,10-methenyltetrahydrofolate to 10-formyltetrahydrofolate. The protein is Bifunctional protein FolD of Photobacterium profundum (strain SS9).